The primary structure comprises 190 residues: Imidazoleglycerol-phosphate dehydratase (190 aa).

This sequence belongs to the imidazoleglycerol-phosphate dehydratase family.

It is found in the cytoplasm. The enzyme catalyses D-erythro-1-(imidazol-4-yl)glycerol 3-phosphate = 3-(imidazol-4-yl)-2-oxopropyl phosphate + H2O. The protein operates within amino-acid biosynthesis; L-histidine biosynthesis; L-histidine from 5-phospho-alpha-D-ribose 1-diphosphate: step 6/9. The protein is Imidazoleglycerol-phosphate dehydratase of Methanococcus vannielii (strain ATCC 35089 / DSM 1224 / JCM 13029 / OCM 148 / SB).